A 397-amino-acid chain; its full sequence is Mannitol-1-phosphate 5-dehydrogenase (397 aa).

9 to 20 (AVHFGAGNIGRG) serves as a coordination point for NAD(+). The active site involves Lys-220.

This sequence belongs to the mannitol dehydrogenase family. Monomer.

It carries out the reaction D-mannitol 1-phosphate + NAD(+) = beta-D-fructose 6-phosphate + NADH + H(+). In terms of biological role, catalyzes the NAD(H)-dependent interconversion of D-fructose 6-phosphate and D-mannitol 1-phosphate in the mannitol metabolic pathway. This chain is Mannitol-1-phosphate 5-dehydrogenase, found in Podospora anserina (strain S / ATCC MYA-4624 / DSM 980 / FGSC 10383) (Pleurage anserina).